Reading from the N-terminus, the 517-residue chain is Intermediate filament family orphan 2 (517 aa).

The IF rod domain maps to 53-484 (NIHLLKGLNV…RLIKGSADRN (432 aa)). Disordered regions lie at residues 104 to 129 (EQAV…SSGA), 330 to 349 (KVAS…RFSD), and 478 to 517 (KGSA…PMVS). The span at 485-497 (SPSPSSVASSDSG) shows a compositional bias: low complexity. A compositionally biased stretch (acidic residues) spans 501–517 (EIQDEFEREADVEPMVS).

Belongs to the intermediate filament family.

This chain is Intermediate filament family orphan 2 (IFFO2), found in Homo sapiens (Human).